The following is a 394-amino-acid chain: Elongation factor Tu 2 (394 aa).

The tr-type G domain maps to 9–204 (KPHCNIGTIG…SIDDYIPQPT (196 aa)). A G1 region spans residues 18-25 (GHVDHGKT). 18-25 (GHVDHGKT) is a binding site for GTP. Thr25 is a binding site for Mg(2+). The segment at 61-65 (GITIQ) is G2. The interval 82–85 (DCPG) is G3. GTP is bound by residues 82-86 (DCPGH) and 137-140 (NKID). The segment at 137–140 (NKID) is G4. Residues 174–176 (SAL) form a G5 region.

The protein belongs to the TRAFAC class translation factor GTPase superfamily. Classic translation factor GTPase family. EF-Tu/EF-1A subfamily. Monomer.

It is found in the cytoplasm. It catalyses the reaction GTP + H2O = GDP + phosphate + H(+). GTP hydrolase that promotes the GTP-dependent binding of aminoacyl-tRNA to the A-site of ribosomes during protein biosynthesis. In Orientia tsutsugamushi (strain Boryong) (Rickettsia tsutsugamushi), this protein is Elongation factor Tu 2.